Reading from the N-terminus, the 28-residue chain is M-poneritoxin-Da4b (28 aa).

An Alanine amide modification is found at A28.

In terms of tissue distribution, expressed by the venom gland.

The protein resides in the secreted. Its function is as follows. The synthetic peptide has antimicrobial activity against the Gram-positive bacteria B.amyloliquefacies S499 (MIC=0.05 mM), L.monocytogenes 2231 and S.aureus ATCC 29213, against the Gram-negative bacteria P.putida BTP1, P.aeruginosa PaO1 and E.coli ATCC 10536, and against the fungi S.cerevisiae, R.mucilaginosa and C.cucumerinum. It is not active against the fungi F.oxysporum and B.cinerea. This is M-poneritoxin-Da4b from Dinoponera australis (Giant neotropical hunting ant).